Here is a 335-residue protein sequence, read N- to C-terminus: Biotin synthase (335 aa).

The region spanning 51–278 (NTVQLSSLLS…LAKVRLSAGR (228 aa)) is the Radical SAM core domain. [4Fe-4S] cluster-binding residues include cysteine 66, cysteine 70, and cysteine 73. [2Fe-2S] cluster contacts are provided by cysteine 110, cysteine 141, cysteine 201, and arginine 273.

This sequence belongs to the radical SAM superfamily. Biotin synthase family. Homodimer. [4Fe-4S] cluster is required as a cofactor. It depends on [2Fe-2S] cluster as a cofactor.

It carries out the reaction (4R,5S)-dethiobiotin + (sulfur carrier)-SH + 2 reduced [2Fe-2S]-[ferredoxin] + 2 S-adenosyl-L-methionine = (sulfur carrier)-H + biotin + 2 5'-deoxyadenosine + 2 L-methionine + 2 oxidized [2Fe-2S]-[ferredoxin]. It functions in the pathway cofactor biosynthesis; biotin biosynthesis; biotin from 7,8-diaminononanoate: step 2/2. In terms of biological role, catalyzes the conversion of dethiobiotin (DTB) to biotin by the insertion of a sulfur atom into dethiobiotin via a radical-based mechanism. The polypeptide is Biotin synthase (Bordetella pertussis (strain Tohama I / ATCC BAA-589 / NCTC 13251)).